We begin with the raw amino-acid sequence, 465 residues long: Cysteine--tRNA ligase (465 aa).

A Zn(2+)-binding site is contributed by Cys27. Positions 29–39 match the 'HIGH' region motif; sequence PTVYNFFHIGN. The Zn(2+) site is built by Cys207, His232, and Glu236. The 'KMSKS' region signature appears at 264-268; sequence KMSKS. Lys267 contributes to the ATP binding site.

This sequence belongs to the class-I aminoacyl-tRNA synthetase family. Monomer. Requires Zn(2+) as cofactor.

It localises to the cytoplasm. It carries out the reaction tRNA(Cys) + L-cysteine + ATP = L-cysteinyl-tRNA(Cys) + AMP + diphosphate. The sequence is that of Cysteine--tRNA ligase from Clostridium botulinum (strain Okra / Type B1).